Consider the following 923-residue polypeptide: Cell cycle and apoptosis regulator protein 2 (923 aa).

The tract at residues 1 to 35 (MSQFKRQRINPLPGGRNFSGTASTSLLGPPPGLLT) is disordered. Thr35 bears the Phosphothreonine mark. Lys112 is subject to N6-acetyllysine; by KAT8. Lys123 is modified (N6-methyllysine). Ser124 bears the Phosphoserine mark. Disordered stretches follow at residues 178–218 (LNRF…KKPR), 446–510 (KAAE…PAVI), and 568–643 (VSPP…SEDL). Arg180 carries the post-translational modification Omega-N-methylarginine. Residues 188 to 200 (GRLDQGRSDDYDS) show a composition bias toward basic and acidic residues. Residue Lys215 is modified to N6-acetyllysine; by KAT8. Residues 446–458 (KAAEAAPPTQEAQ) show a composition bias toward low complexity. Position 454 is a phosphothreonine; by ATM, ATR and CK2 (Thr454). Position 484 is a phosphothreonine (Thr484). Residue Ser569 is modified to Phosphoserine. Over residues 572-602 (EPEKEEAAKEEATKEEEAIKEEVVKEPKDEA) the composition is skewed to basic and acidic residues. Lys591 is covalently cross-linked (Glycyl lysine isopeptide (Lys-Gly) (interchain with G-Cter in SUMO2 and SUMO3); alternate). Lys591 participates in a covalent cross-link: Glycyl lysine isopeptide (Lys-Gly) (interchain with G-Cter in SUMO2); alternate. An interaction with MCC region spans residues 610–670 (ESEAPLKEDG…EEFAGAKLED (61 aa)). A phosphoserine mark is found at Ser627, Ser675, Ser678, Ser681, Ser687, and Ser808. Residues 704–923 (DCLLAFVFFD…VEKEEPAPSN (220 aa)) form an interaction with NR1D1 region. The stretch at 829 to 909 (LENKIHTLEL…QLEIQRVVEK (81 aa)) forms a coiled coil. Residue Thr897 is modified to Phosphothreonine.

Component of the DBIRD complex. Interacts with ZNF326/ZIRD; the interaction is direct. Interacts (via N-terminus) with SIRT1, which inhibits the deacetylation of substrates. Interacts (via N-terminus) with SUV39H1; this interaction abolishes the interaction with SIRT1. Component of a nuclear receptor-mediated transcription complex composed of at least ZNF335, CCAR2 and EMSY; the complex stimulates the transcription of nuclear receptor target genes such as SOX9 and HOXA1. Within the complex interacts with EMSY and interacts with ZNF335 (via C-terminus). Components of this complex may associate with components of a histone methylation complex to form a complex at least composed of ZNF335, HCFC1, CCAR2, EMSY, MKI67, RBBP5, ASH2L and WDR5. Within this complex, interacts with ASH2L. Interacts with NR1D1. Interacts (via N-terminus) with ESR1 and ESR2. Interacts (via N-terminus) with HDAC3 (via C-terminus). Interacts with HDAC1 and MED2F. Interacts with MCC. Interacts (via N-terminus) with NR1H2 and NR1H3 in a ligand-independent manner. Interacts with CSNK2A1. Interacts (via N-terminus) with p53/TP53. Interacts (via N-terminus) with BRCA1 (via the BRCT domains). Interacts (via N-terminus) with CHEK2 (via protein kinase domain). Interacts with PSEM3. Interacts (via N-terminus) with PSIA3 and SENP1. The sumoylated form shows a preferential interaction with SIRT1 as compared to its unmodified form. Interacts with CECR2; may form part of the CERF-1 and/or CEF-5 ISWI chromatin remodeling complexes in embryonic stem cells. ATM/ATR-mediated phosphorylation at Thr-454 upon DNA damage promotes binding to SIRT1. Phosphorylation at Thr-454 promotes its sumoylation by switching the binding partner of CCAR2 from SENP1 to PIAS3. In terms of processing, acetylation at Lys-112 and Lys-215 by KAT8 prevents inhibitory binding to SIRT1 and increases its deacetylase activity. Post-translationally, genotoxic stress induces its sumoylation and sumoylation promotes the SIRT1-CCAR2 interaction which in turn inhibits SIRT1-mediated deacetylation of p53/TP53. Sumoylation leads to transcriptional activation of p53/TP53 by sequestering SIRT1 from p53/TP53. Desumoylated by SENP1. In terms of tissue distribution, expressed in gastric carcinoma tissue and the expression gradually increases with the progression of the carcinoma (at protein level). Expressed ubiquitously in normal tissues. Expressed in 84 to 100% of neoplastic breast, lung, and colon tissues.

Its subcellular location is the nucleus. It localises to the cytoplasm. The protein resides in the cytoskeleton. The protein localises to the spindle. Core component of the DBIRD complex, a multiprotein complex that acts at the interface between core mRNP particles and RNA polymerase II (RNAPII) and integrates transcript elongation with the regulation of alternative splicing: the DBIRD complex affects local transcript elongation rates and alternative splicing of a large set of exons embedded in (A + T)-rich DNA regions. Inhibits SIRT1 deacetylase activity leading to increasing levels of p53/TP53 acetylation and p53-mediated apoptosis. Inhibits SUV39H1 methyltransferase activity. Mediates ligand-dependent transcriptional activation by nuclear hormone receptors. Plays a critical role in maintaining genomic stability and cellular integrity following UV-induced genotoxic stress. Regulates the circadian expression of the core clock components NR1D1 and BMAL1. Enhances the transcriptional repressor activity of NR1D1 through stabilization of NR1D1 protein levels by preventing its ubiquitination and subsequent degradation. Represses the ligand-dependent transcriptional activation function of ESR2. Acts as a regulator of PCK1 expression and gluconeogenesis by a mechanism that involves, at least in part, both NR1D1 and SIRT1. Negatively regulates the deacetylase activity of HDAC3 and can alter its subcellular localization. Positively regulates the beta-catenin pathway (canonical Wnt signaling pathway) and is required for MCC-mediated repression of the beta-catenin pathway. Represses ligand-dependent transcriptional activation function of NR1H2 and NR1H3 and inhibits the interaction of SIRT1 with NR1H3. Plays an important role in tumor suppression through p53/TP53 regulation; stabilizes p53/TP53 by affecting its interaction with ubiquitin ligase MDM2. Represses the transcriptional activator activity of BRCA1. Inhibits SIRT1 in a CHEK2 and PSEM3-dependent manner and inhibits the activity of CHEK2 in vitro. The sequence is that of Cell cycle and apoptosis regulator protein 2 (CCAR2) from Homo sapiens (Human).